Here is a 623-residue protein sequence, read N- to C-terminus: Chaperone protein HtpG (623 aa).

Residues 1-336 form an a; substrate-binding region; the sequence is MVSKQQTMGF…ASDLPLNISR (336 aa). The b stretch occupies residues 337 to 550; the sequence is EILQDNKQVE…EQDMGLEMQR (214 aa). The interval 551-623 is c; sequence ILQAAGQQIP…NRVNRLLVSS (73 aa).

This sequence belongs to the heat shock protein 90 family. In terms of assembly, homodimer.

Its subcellular location is the cytoplasm. Its function is as follows. Molecular chaperone. Has ATPase activity. This Legionella pneumophila (strain Lens) protein is Chaperone protein HtpG.